Here is a 377-residue protein sequence, read N- to C-terminus: Bifunctional enzyme IspD/IspF (377 aa).

Positions M1 to V221 are 2-C-methyl-D-erythritol 4-phosphate cytidylyltransferase. The 2-C-methyl-D-erythritol 2,4-cyclodiphosphate synthase stretch occupies residues R222–P377. Residues D228 and H230 each coordinate a divalent metal cation. Residues D228 to H230 and H254 to S255 contribute to the 4-CDP-2-C-methyl-D-erythritol 2-phosphate site. H262 serves as a coordination point for a divalent metal cation. Residues D276 to G278, T352 to E355, F359, and R362 contribute to the 4-CDP-2-C-methyl-D-erythritol 2-phosphate site.

In the N-terminal section; belongs to the IspD/TarI cytidylyltransferase family. IspD subfamily. This sequence in the C-terminal section; belongs to the IspF family. The cofactor is a divalent metal cation.

It carries out the reaction 2-C-methyl-D-erythritol 4-phosphate + CTP + H(+) = 4-CDP-2-C-methyl-D-erythritol + diphosphate. The enzyme catalyses 4-CDP-2-C-methyl-D-erythritol 2-phosphate = 2-C-methyl-D-erythritol 2,4-cyclic diphosphate + CMP. It functions in the pathway isoprenoid biosynthesis; isopentenyl diphosphate biosynthesis via DXP pathway; isopentenyl diphosphate from 1-deoxy-D-xylulose 5-phosphate: step 2/6. The protein operates within isoprenoid biosynthesis; isopentenyl diphosphate biosynthesis via DXP pathway; isopentenyl diphosphate from 1-deoxy-D-xylulose 5-phosphate: step 4/6. Functionally, bifunctional enzyme that catalyzes the formation of 4-diphosphocytidyl-2-C-methyl-D-erythritol from CTP and 2-C-methyl-D-erythritol 4-phosphate (MEP) (IspD), and catalyzes the conversion of 4-diphosphocytidyl-2-C-methyl-D-erythritol 2-phosphate (CDP-ME2P) to 2-C-methyl-D-erythritol 2,4-cyclodiphosphate (ME-CPP) with a corresponding release of cytidine 5-monophosphate (CMP) (IspF). The polypeptide is Bifunctional enzyme IspD/IspF (Ruegeria pomeroyi (strain ATCC 700808 / DSM 15171 / DSS-3) (Silicibacter pomeroyi)).